A 348-amino-acid polypeptide reads, in one-letter code: D-alanine--D-alanine ligase (348 aa).

In terms of domain architecture, ATP-grasp spans 136–344; it reads KSVFKSYNLP…LEKLVASLIE (209 aa). ATP is bound at residue 171–226; the sequence is NKIINYPCFIKPANLGSSVGITKAYSKEEFITGIEFAAKYDERIIVEKSIEGRELE. Mg(2+) contacts are provided by Asp297, Glu311, and Asn313.

This sequence belongs to the D-alanine--D-alanine ligase family. Mg(2+) serves as cofactor. The cofactor is Mn(2+).

It localises to the cytoplasm. It carries out the reaction 2 D-alanine + ATP = D-alanyl-D-alanine + ADP + phosphate + H(+). The protein operates within cell wall biogenesis; peptidoglycan biosynthesis. Cell wall formation. This Prochlorococcus marinus (strain NATL1A) protein is D-alanine--D-alanine ligase.